The primary structure comprises 55 residues: Large ribosomal subunit protein bL33 (55 aa).

Belongs to the bacterial ribosomal protein bL33 family.

The sequence is that of Large ribosomal subunit protein bL33 from Photorhabdus laumondii subsp. laumondii (strain DSM 15139 / CIP 105565 / TT01) (Photorhabdus luminescens subsp. laumondii).